Consider the following 522-residue polypeptide: Cytochrome P450 monooxygenase AKT7 (522 aa).

Residues 10–30 traverse the membrane as a helical segment; that stretch reads LYVTCTVLAALILGYIQAMII. Position 452 (cysteine 452) interacts with heme.

The protein belongs to the cytochrome P450 family. Heme is required as a cofactor.

Its subcellular location is the membrane. It participates in mycotoxin biosynthesis. In terms of biological role, cytochrome P450 monooxygenase; part of the gene clusters that mediate the biosynthesis of the host-selective toxins (HSTs) AK-toxins responsible for Japanese pear black spot disease by the Japanese pear pathotype. AK-toxins are esters of 9,10-epoxy 8-hydroxy 9-methyldecatrienoic acid (EDA). On cellular level, AK-toxins affect plasma membrane of susceptible cells and cause a sudden increase in loss of K(+) after a few minutes of toxin treatment. The acyl-CoA ligase AKT1, the hydrolase AKT2 and enoyl-CoA hydratase AKT3 are all involved in the biosynthesis of the AK-, AF- and ACT-toxin common 9,10-epoxy-8-hydroxy-9-methyl-decatrienoic acid (EDA) structural moiety. Part of the EDA biosynthesis occurs in the peroxisome since these 3 enzymes are localized in peroxisomes. The exact roles of the 3 enzymes, as well as of additional AK-toxin clusters enzymes, including AKT4, AKT6 and AKTS1, have still to be elucidated. The Cytochrome P450 monooxygenase AKT7 on the other side functions to limit production of EDA and AK-toxin, probably via the catalysis of a side reaction of EDA or its precursor. The protein is Cytochrome P450 monooxygenase AKT7 of Alternaria alternata (Alternaria rot fungus).